The following is a 208-amino-acid chain: Small ribosomal subunit protein uS4 (208 aa).

Residues 98–159 (RRLDNVAYRL…KSRKVAAISE (62 aa)) enclose the S4 RNA-binding domain.

It belongs to the universal ribosomal protein uS4 family. In terms of assembly, part of the 30S ribosomal subunit. Contacts protein S5. The interaction surface between S4 and S5 is involved in control of translational fidelity.

One of the primary rRNA binding proteins, it binds directly to 16S rRNA where it nucleates assembly of the body of the 30S subunit. Functionally, with S5 and S12 plays an important role in translational accuracy. The chain is Small ribosomal subunit protein uS4 from Geobacter sp. (strain M21).